The primary structure comprises 293 residues: Membrane protein RL13 (293 aa).

The signal sequence occupies residues 1–19 (MHWHLAITWTVIILTFSEC). The helical transmembrane segment at 245 to 265 (IPLGIHAVWAGIVVSVALIAL) threads the bilayer.

It is found in the virion membrane. In terms of biological role, may play a role in modifying tropism or in modulating cell signaling during virus entry. Since RL13 expression severely impairs HCMV replication in epithelial cell cultures, it may act as a regulator promoting persistence by suppressing the switch to fully lytic infection. The sequence is that of Membrane protein RL13 (RL13) from Human cytomegalovirus (strain Merlin) (HHV-5).